The sequence spans 1086 residues: Sterol regulatory element-binding protein cleavage-activating protein (1086 aa).

Residues 1 to 35 (MRIFTLGKGRISRGYARQVNPSLFAKYSYCIANNP) lie on the Cytoplasmic side of the membrane. The chain crosses the membrane as a helical span at residues 36–56 (WYFILVFTLLSITGIYSSLVA). The Lumenal portion of the chain corresponds to 57 to 229 (YQQSLYDQSL…TVVARIPDLT (173 aa)). N-linked (GlcNAc...) asparagine glycans are attached at residues asparagine 94 and asparagine 168. A helical transmembrane segment spans residues 230 to 250 (VIYRWYLWVGFGVGLFAYLYL). Residues 233 to 391 (RWYLWVGFGV…GSFFLAVLSV (159 aa)) form the SSD domain. The Cytoplasmic segment spans residues 251-265 (SLVRLHDIRAKFGLT). A helical transmembrane segment spans residues 266–286 (ATIFIQSGTAYFSTCSLLYFF). Residues 287 to 290 (ERTG) are Lumenal-facing. A helical transmembrane segment spans residues 291-311 (PICPWPMAYYIIIFMDIENSF). The Cytoplasmic segment spans residues 312–337 (RLLRAVIASPQTKRVPSRIMEGFSST). The helical transmembrane segment at 338–358 (IIASFSSLLKKLLTLFVLSFF) threads the bilayer. Residues 359–367 (VYPLVQEFC) are Lumenal-facing. A helical transmembrane segment spans residues 368 to 388 (LFLACSFVVSFLLHGSFFLAV). The Cytoplasmic segment spans residues 389 to 422 (LSVDIRRLELQDFLDSNSSNRNSKWWVPYLEYVR). The short motif at 396–401 (LELQDF) is the ER export signal element. The chain crosses the membrane as a helical span at residues 423 to 443 (FMWSPWIIDNLGTVSFHMYVI). Residues 444-544 (YLQLQSSTDI…FHDRRVWRWS (101 aa)) are Lumenal-facing. An N-linked (GlcNAc...) asparagine glycan is attached at asparagine 454. A helical transmembrane segment spans residues 545 to 565 (TFFSILFAIDFAVGLLVKALL). The Cytoplasmic segment spans residues 566–1086 (RGWSDHDELS…QRKRSGTIGC (521 aa)). WD repeat units lie at residues 593-632 (HHQL…TKLV), 637-675 (QMPR…LMLQ), 680-727 (CKPN…EGAD), 736-776 (LSSP…WSPK), and 963-1009 (GHYN…KKHR). Residues 640–1086 (RTLKAIALDP…QRKRSGTIGC (447 aa)) form an interaction with sre1 region.

The protein belongs to the WD repeat SCAP family. Forms a tight complex with scp1, composed of 4 copies of scp1 and 4 copies of sre1.

Its subcellular location is the endoplasmic reticulum membrane. The protein resides in the golgi apparatus membrane. Escort protein required for sre1 processing at low sterol as well as oxygen levels. May regulate export of the scp1/sre1 complex from the ER at low sterol or oxygen levels. 4-methyl sterols bound to scp1 may mask an ER export signal in scp1 leading to retention of the complex in the ER. Release of 4-methyl sterols may trigger a conformational change in the SSD domain of scp1 unmasking the ER export signal leading to recruitment into COPII-coated vesicles, transport to the Golgi complex, proteolytic cleavage of sre1 in the Golgi, release of the transcription factor fragment of sre1 from the membrane, its import into the nucleus and up-regulation of genes required for ergosterol biosynthesis as well as anaerobic growth. Binds 4-methyl sterols. This Schizosaccharomyces pombe (strain 972 / ATCC 24843) (Fission yeast) protein is Sterol regulatory element-binding protein cleavage-activating protein.